A 906-amino-acid chain; its full sequence is Kinesin-like protein KIN-7G (906 aa).

The region spanning 26–344 is the Kinesin motor domain; it reads SVAVAVRFRP…LKFAHRAKHI (319 aa). Position 105–112 (105–112) interacts with ATP; it reads GVTSSGKT. Coiled-coil stretches lie at residues 346 to 385, 733 to 814, and 839 to 875; these read IQATQNKIMDARSLIKKYQNEIRQLKEELEQLRRSIRTGT, SDEF…GRNQ, and GDMNALEAMLKEKDQRQAELHTKIEESKQKEAFLEKE. The disordered stretch occupies residues 803–840; sequence RLSSELASGRNQRRGSHGPRGARRESHTKRYEPARRGD. Residues 813 to 823 show a composition bias toward basic residues; that stretch reads NQRRGSHGPRG. Residues 824–840 show a composition bias toward basic and acidic residues; the sequence is ARRESHTKRYEPARRGD.

Belongs to the TRAFAC class myosin-kinesin ATPase superfamily. Kinesin family. KIN-7 subfamily.

In Oryza sativa subsp. japonica (Rice), this protein is Kinesin-like protein KIN-7G.